The primary structure comprises 97 residues: uncharacterized protein (97 aa).

An N-acetylserine modification is found at serine 2.

This is an uncharacterized protein from Mycobacterium tuberculosis (strain ATCC 25618 / H37Rv).